The sequence spans 175 residues: Arsenite oxidase subunit AioB (175 aa).

Residues 1–32 (MSDTINLTRRGFLKVSGSGVAVAATLSPIASA) constitute a signal peptide (tat-type signal). The region spanning 62 to 158 (NEPVSFTYPD…LRYDEASDAL (97 aa)) is the Rieske domain. Residues Cys102, His104, Cys120, and His123 each coordinate [2Fe-2S] cluster. An intrachain disulfide couples Cys107 to Cys122.

It belongs to the AOX family. As to quaternary structure, heterodimer consisting of a large and a small subunit. Requires [2Fe-2S] cluster as cofactor. Post-translationally, predicted to be exported by the Tat system. The position of the signal peptide cleavage has not been experimentally proven.

It carries out the reaction 2 oxidized [azurin] + arsenite + H2O = 2 reduced [azurin] + arsenate + 3 H(+). Involved in the detoxification of arsenic. Oxidizes As(III)O3(3-) (arsenite) to the somewhat less toxic As(V)O4(3-) (arsenate). The chain is Arsenite oxidase subunit AioB (aioB) from Alcaligenes faecalis.